Consider the following 177-residue polypeptide: Inorganic pyrophosphatase (177 aa).

Positions 30, 44, and 56 each coordinate substrate. The Mg(2+) site is built by Asp66, Asp71, and Asp103. Position 142 (Tyr142) interacts with substrate.

It belongs to the PPase family. Homohexamer. The cofactor is Mg(2+).

The protein resides in the cytoplasm. It catalyses the reaction diphosphate + H2O = 2 phosphate + H(+). Functionally, catalyzes the hydrolysis of inorganic pyrophosphate (PPi) forming two phosphate ions. The polypeptide is Inorganic pyrophosphatase (Caulobacter vibrioides (strain ATCC 19089 / CIP 103742 / CB 15) (Caulobacter crescentus)).